The primary structure comprises 255 residues: Small ribosomal subunit protein uS2 (255 aa).

This sequence belongs to the universal ribosomal protein uS2 family.

The polypeptide is Small ribosomal subunit protein uS2 (Streptococcus thermophilus (strain ATCC BAA-491 / LMD-9)).